We begin with the raw amino-acid sequence, 415 residues long: Glucose-1-phosphate adenylyltransferase (415 aa).

Alpha-D-glucose 1-phosphate contacts are provided by residues tyrosine 98, glycine 163, 178–179 (EK), and serine 189.

This sequence belongs to the bacterial/plant glucose-1-phosphate adenylyltransferase family. In terms of assembly, homotetramer.

It carries out the reaction alpha-D-glucose 1-phosphate + ATP + H(+) = ADP-alpha-D-glucose + diphosphate. Its pathway is glycan biosynthesis; glycogen biosynthesis. Its function is as follows. Involved in the biosynthesis of ADP-glucose, a building block required for the elongation reactions to produce glycogen. Catalyzes the reaction between ATP and alpha-D-glucose 1-phosphate (G1P) to produce pyrophosphate and ADP-Glc. The chain is Glucose-1-phosphate adenylyltransferase from Fervidobacterium nodosum (strain ATCC 35602 / DSM 5306 / Rt17-B1).